A 299-amino-acid polypeptide reads, in one-letter code: Zinc finger protein 414 (299 aa).

Composition is skewed to polar residues over residues 1 to 20 (MEELSGPSSDTLATVESSSN) and 70 to 80 (SCQTSSTTRGV). The tract at residues 1 to 102 (MEELSGPSSD…PPPGKQIPCS (102 aa)) is disordered. C2H2-type zinc fingers lie at residues 99-123 (IPCSSPGCSLSFPSVRDLAQHLRTH) and 135-159 (FRCSALSCTESFPSMQELVAHGKLH). A C2H2-type 3; degenerate zinc finger spans residues 166–190 (FKCENCLLRFRTHRSLFKHLHVCID). 2 disordered regions span residues 193 to 228 (QNPAPPPPPALDKEPPVPERPPESDPSSSLGLPFPL) and 254 to 299 (PRLR…GACR). Over residues 203 to 215 (LDKEPPVPERPPE) the composition is skewed to basic and acidic residues. The span at 217–228 (DPSSSLGLPFPL) shows a compositional bias: low complexity. A compositionally biased stretch (polar residues) spans 268–285 (TSSTAIWKKSQGATSSPR).

It belongs to the krueppel C2H2-type zinc-finger protein family.

It is found in the nucleus. Its function is as follows. May be involved in transcriptional regulation. This is Zinc finger protein 414 (Znf414) from Rattus norvegicus (Rat).